The sequence spans 475 residues: MSPKTETKASVGFKAGVKDYRLTYYTPEYQTKDTDILAAFRVTPQPGVPAEEAGAAVAAESSTGTWTTVWTDGLTSLDRYKGRCYDIEPVPGEENQFIAYVAYPLDLFEEGSVTNLFTSIVGNVFGFKALRALRLEDLRIPPAYSKTFQGPPHGIQVERDKLNKYGRPLLGCTIKPKLGLSAKNYGRAVYECLRGGLDFTKDDENVNSQPFMRWRDRFVFCAEAINKAQAETGEIKGHYLNATAGTCEEMIKRAVFARELGVPIVMHDYLTGGFTANTSLAHYCRDNGLLLHIHRAMHAVIDRQRNHGMHFRVLAKALRMSGGDHIHAGTVVGKLEGERDVTLGFVDLLRDDFIEKDRSRGIYFTQDWVSMPGVMPVASGGIHVWHMPALTEIFGDDSVLQFGGGTLGHPWGNAPGAVANRVALEACVQARNEGRDLAREGNEVIREASKWSPELAAACEIWKEIKFEFDVIDRL.

A propeptide spanning residues 1–2 (MS) is cleaved from the precursor. At Pro3 the chain carries N-acetylproline. Lys14 is subject to N6,N6,N6-trimethyllysine. Substrate is bound by residues Asn123 and Thr173. Catalysis depends on Lys175, which acts as the Proton acceptor. Lys177 provides a ligand contact to substrate. The Mg(2+) site is built by Lys201, Asp203, and Glu204. Lys201 bears the N6-carboxylysine mark. His294 acts as the Proton acceptor in catalysis. Positions 295, 327, and 379 each coordinate substrate.

It belongs to the RuBisCO large chain family. Type I subfamily. Heterohexadecamer of 8 large chains and 8 small chains; disulfide-linked. The disulfide link is formed within the large subunit homodimers. Mg(2+) serves as cofactor. Post-translationally, the disulfide bond which can form in the large chain dimeric partners within the hexadecamer appears to be associated with oxidative stress and protein turnover.

It localises to the plastid. The protein localises to the chloroplast. It catalyses the reaction 2 (2R)-3-phosphoglycerate + 2 H(+) = D-ribulose 1,5-bisphosphate + CO2 + H2O. The enzyme catalyses D-ribulose 1,5-bisphosphate + O2 = 2-phosphoglycolate + (2R)-3-phosphoglycerate + 2 H(+). In terms of biological role, ruBisCO catalyzes two reactions: the carboxylation of D-ribulose 1,5-bisphosphate, the primary event in carbon dioxide fixation, as well as the oxidative fragmentation of the pentose substrate in the photorespiration process. Both reactions occur simultaneously and in competition at the same active site. This is Ribulose bisphosphate carboxylase large chain from Pinus edulis (Pinyon pine).